The primary structure comprises 434 residues: MTTDSPTLSLSPGLDHRALAKAAQRVDELLDGLPSPSARTPAQREAASSALDEIRAARTEYVEAHAEEIYDRLTDGRTRYLRLDELVRAAASAYPGLVPTEAQMAAERSRRQAEKEGREIDQGIFLRGILSAPKAGPHLLDAMLRPTARALELLPEFVETGVVRMEAASLERRDGVAYLTLCRDDCLNAEDAQQVDDMETAVDLALLDPAVRVGMLRGGVMSHPRYAGRRVFCAGINLKKLSSGDIPLVDFLLRRELGYIHKIVRGVATDGSWRARVIDKPWLAAVDSFAIGGGAQLLLVFDHVVAASDAYFSLPAATEGIIPGAANYRLSRFTGPRLARQVILGGRRITADEPDARLLVDQVVPPEEMDAAIESALAALDGDAVRANRRMVNLAEEPPDGFRRYMAEFALQQALRIYGADVIGKVGGFAAGSR.

Residues D184, E190, 223-226 (HPRY), 234-239 (AGINLK), G293, 322-324 (IPG), and Q413 each bind substrate.

Belongs to the enoyl-CoA hydratase/isomerase family. In terms of assembly, homohexamer; dimer of trimers.

The catalysed reaction is (3,5-dihydroxyphenyl)acetyl-CoA + O2 = 2-(3,5-dihydroxyphenyl)-2-oxoacetate + CoA + H(+). In terms of biological role, involved in the biosynthesis of the nonproteinogenic amino acid monomer (S)-3,5-dihydroxyphenylglycine (Dpg) responsible of the production of vancomycin and teicoplanin antibiotics. Catalyzes the unusual conversion 3,5-dihydroxyphenylacetyl-CoA (DPA-CoA) to 3,5-dihydroxyphenylglyoxylate. DpgC performed a net four-electron oxidation of the benzylic carbon of DPA-CoA and the hydrolysis of the thioester bond to generate free CoA. It can also use phenylacetyl-CoA (PA-CoA) as substrate. This chain is (3,5-dihydroxyphenyl)acetyl-CoA 1,2-dioxygenase (dpgC), found in Amycolatopsis orientalis (Nocardia orientalis).